A 427-amino-acid polypeptide reads, in one-letter code: Forkhead box protein A1-B (427 aa).

Positions 157–251 form a DNA-binding region, fork-head; it reads KPPYSYISLI…ENGCYLRRQK (95 aa). The segment covering 256 to 272 has biased composition (basic and acidic residues); that stretch reads EKTQGGKGNQDGRKDHS. The tract at residues 256 to 336 is disordered; the sequence is EKTQGGKGNQ…HQNHSTHSLA (81 aa). Low complexity predominate over residues 285–302; sequence SSQMDSSSSMSNPSSSPQ. Positions 323 to 334 are enriched in polar residues; sequence PLSSHQNHSTHS.

Present in the vegetal pole and marginal zone but not the animal pole of gastrulae and in equal levels in the dorsal and ventral halves of both gastrulae and neurulae. At neurula stage, expressed in the notochord. During tailbud stages, expressed in the foregut, brain, hypocord, neural floor plate and in two lines of cells just dorsal and ventral to the notochord. Expressed in the adult liver.

The protein resides in the nucleus. Functionally, probable transcription factor. This chain is Forkhead box protein A1-B (foxa1-b), found in Xenopus laevis (African clawed frog).